We begin with the raw amino-acid sequence, 759 residues long: Arylphorin subunit C223 (759 aa).

Positions methionine 1–alanine 15 are cleaved as a signal peptide.

The protein belongs to the hemocyanin family. As to quaternary structure, heterohexamer. Fat body.

The protein localises to the secreted. It is found in the extracellular space. Its function is as follows. Arylphorin is a larval storage protein (LSP) which may serve as a storage protein used primarily as a source of aromatic amino acids for protein synthesis during metamorphosis. It is a constituent of the sclerotizing system of the cuticle, and serves as a carrier for ecdysteroid hormone. The polypeptide is Arylphorin subunit C223 (Calliphora vicina (Blue blowfly)).